A 357-amino-acid polypeptide reads, in one-letter code: Thymidine kinase (357 aa).

Residue 17–24 (GAHGLGKT) coordinates ATP. Residue Glu45 is the Proton acceptor of the active site. Arg186 is a binding site for ATP. Position 192 (Arg192) interacts with substrate.

This sequence belongs to the herpesviridae thymidine kinase family. As to quaternary structure, homodimer.

The enzyme catalyses thymidine + ATP = dTMP + ADP + H(+). Functionally, catalyzes the transfer of the gamma-phospho group of ATP to thymidine to generate dTMP in the salvage pathway of pyrimidine synthesis. The dTMP serves as a substrate for DNA polymerase during viral DNA replication. Allows the virus to be reactivated and to grow in non-proliferative cells lacking a high concentration of phosphorylated nucleic acid precursors. The sequence is that of Thymidine kinase from Bovine herpesvirus 1 (strain 6660) (BoHV-1).